Consider the following 360-residue polypeptide: Aminomethyltransferase (360 aa).

Belongs to the GcvT family. The glycine cleavage system is composed of four proteins: P, T, L and H.

The catalysed reaction is N(6)-[(R)-S(8)-aminomethyldihydrolipoyl]-L-lysyl-[protein] + (6S)-5,6,7,8-tetrahydrofolate = N(6)-[(R)-dihydrolipoyl]-L-lysyl-[protein] + (6R)-5,10-methylene-5,6,7,8-tetrahydrofolate + NH4(+). Functionally, the glycine cleavage system catalyzes the degradation of glycine. The sequence is that of Aminomethyltransferase from Flavobacterium psychrophilum (strain ATCC 49511 / DSM 21280 / CIP 103535 / JIP02/86).